The following is a 148-amino-acid chain: SsrA-binding protein (148 aa).

Residues 124–148 are disordered; that stretch reads QFDKRETEKDRDWQREKARLMREKA.

The protein belongs to the SmpB family.

The protein localises to the cytoplasm. In terms of biological role, required for rescue of stalled ribosomes mediated by trans-translation. Binds to transfer-messenger RNA (tmRNA), required for stable association of tmRNA with ribosomes. tmRNA and SmpB together mimic tRNA shape, replacing the anticodon stem-loop with SmpB. tmRNA is encoded by the ssrA gene; the 2 termini fold to resemble tRNA(Ala) and it encodes a 'tag peptide', a short internal open reading frame. During trans-translation Ala-aminoacylated tmRNA acts like a tRNA, entering the A-site of stalled ribosomes, displacing the stalled mRNA. The ribosome then switches to translate the ORF on the tmRNA; the nascent peptide is terminated with the 'tag peptide' encoded by the tmRNA and targeted for degradation. The ribosome is freed to recommence translation, which seems to be the essential function of trans-translation. In Ralstonia pickettii (strain 12J), this protein is SsrA-binding protein.